The following is a 509-amino-acid chain: ATP synthase subunit alpha (509 aa).

169 to 176 contributes to the ATP binding site; sequence GDRKTGKT.

This sequence belongs to the ATPase alpha/beta chains family. In terms of assembly, F-type ATPases have 2 components, CF(1) - the catalytic core - and CF(0) - the membrane proton channel. CF(1) has five subunits: alpha(3), beta(3), gamma(1), delta(1), epsilon(1). CF(0) has three main subunits: a(1), b(2) and c(9-12). The alpha and beta chains form an alternating ring which encloses part of the gamma chain. CF(1) is attached to CF(0) by a central stalk formed by the gamma and epsilon chains, while a peripheral stalk is formed by the delta and b chains.

The protein resides in the cell membrane. The catalysed reaction is ATP + H2O + 4 H(+)(in) = ADP + phosphate + 5 H(+)(out). Functionally, produces ATP from ADP in the presence of a proton gradient across the membrane. The alpha chain is a regulatory subunit. This chain is ATP synthase subunit alpha, found in Lacticaseibacillus casei (strain BL23) (Lactobacillus casei).